We begin with the raw amino-acid sequence, 305 residues long: UDP-3-O-acyl-N-acetylglucosamine deacetylase (305 aa).

Zn(2+)-binding residues include His-79, His-238, and Asp-242. The active-site Proton donor is His-265.

It belongs to the LpxC family. Zn(2+) is required as a cofactor.

The catalysed reaction is a UDP-3-O-[(3R)-3-hydroxyacyl]-N-acetyl-alpha-D-glucosamine + H2O = a UDP-3-O-[(3R)-3-hydroxyacyl]-alpha-D-glucosamine + acetate. The protein operates within glycolipid biosynthesis; lipid IV(A) biosynthesis; lipid IV(A) from (3R)-3-hydroxytetradecanoyl-[acyl-carrier-protein] and UDP-N-acetyl-alpha-D-glucosamine: step 2/6. Catalyzes the hydrolysis of UDP-3-O-myristoyl-N-acetylglucosamine to form UDP-3-O-myristoylglucosamine and acetate, the committed step in lipid A biosynthesis. The polypeptide is UDP-3-O-acyl-N-acetylglucosamine deacetylase (Klebsiella pneumoniae subsp. pneumoniae (strain ATCC 700721 / MGH 78578)).